We begin with the raw amino-acid sequence, 352 residues long: Probable protein phosphatase 2C 56 (352 aa).

Disordered stretches follow at residues 18–37 (RGRR…ASRG) and 53–87 (SSSS…ITGG). Low complexity-rich tracts occupy residues 23 to 37 (AASP…ASRG) and 53 to 75 (SSSS…ARTR). A PPM-type phosphatase domain is found at 96–343 (SWDYSSFKGR…DNITCIVLQF (248 aa)). D132, G133, D295, and D334 together coordinate Mn(2+).

It belongs to the PP2C family. The cofactor is Mg(2+). It depends on Mn(2+) as a cofactor.

It carries out the reaction O-phospho-L-seryl-[protein] + H2O = L-seryl-[protein] + phosphate. The enzyme catalyses O-phospho-L-threonyl-[protein] + H2O = L-threonyl-[protein] + phosphate. The sequence is that of Probable protein phosphatase 2C 56 from Oryza sativa subsp. japonica (Rice).